The following is a 379-amino-acid chain: Glucose-1-phosphate adenylyltransferase (379 aa).

Alpha-D-glucose 1-phosphate is bound by residues Gly164, 179-180 (EK), and Ser190.

It belongs to the bacterial/plant glucose-1-phosphate adenylyltransferase family. In terms of assembly, homotetramer.

The enzyme catalyses alpha-D-glucose 1-phosphate + ATP + H(+) = ADP-alpha-D-glucose + diphosphate. It participates in glycan biosynthesis; glycogen biosynthesis. Involved in the biosynthesis of ADP-glucose, a building block required for the elongation reactions to produce glycogen. Catalyzes the reaction between ATP and alpha-D-glucose 1-phosphate (G1P) to produce pyrophosphate and ADP-Glc. In Streptococcus agalactiae serotype Ia (strain ATCC 27591 / A909 / CDC SS700), this protein is Glucose-1-phosphate adenylyltransferase.